The sequence spans 169 residues: 2-C-methyl-D-erythritol 2,4-cyclodiphosphate synthase (169 aa).

Residues D13 and H15 each coordinate a divalent metal cation. Residues 13-15 (DVH) and 39-40 (HS) each bind 4-CDP-2-C-methyl-D-erythritol 2-phosphate. Residue H47 coordinates a divalent metal cation. Residues 61–63 (DIG), 66–70 (FPDTD), F144, and R147 contribute to the 4-CDP-2-C-methyl-D-erythritol 2-phosphate site.

It belongs to the IspF family. Homotrimer. A divalent metal cation serves as cofactor.

It carries out the reaction 4-CDP-2-C-methyl-D-erythritol 2-phosphate = 2-C-methyl-D-erythritol 2,4-cyclic diphosphate + CMP. Its pathway is isoprenoid biosynthesis; isopentenyl diphosphate biosynthesis via DXP pathway; isopentenyl diphosphate from 1-deoxy-D-xylulose 5-phosphate: step 4/6. Its function is as follows. Involved in the biosynthesis of isopentenyl diphosphate (IPP) and dimethylallyl diphosphate (DMAPP), two major building blocks of isoprenoid compounds. Catalyzes the conversion of 4-diphosphocytidyl-2-C-methyl-D-erythritol 2-phosphate (CDP-ME2P) to 2-C-methyl-D-erythritol 2,4-cyclodiphosphate (ME-CPP) with a corresponding release of cytidine 5-monophosphate (CMP). This chain is 2-C-methyl-D-erythritol 2,4-cyclodiphosphate synthase, found in Cupriavidus necator (strain ATCC 17699 / DSM 428 / KCTC 22496 / NCIMB 10442 / H16 / Stanier 337) (Ralstonia eutropha).